A 41-amino-acid chain; its full sequence is Diuretic hormone 1 (41 aa).

At isoleucine 41 the chain carries Isoleucine amide.

It is found in the secreted. In terms of biological role, regulation of fluid secretion. May stimulate primary urine secretion by Malpighian tubules and causes a dose-dependent stimulation of cAMP levels in the tubules. The protein is Diuretic hormone 1 of Hyles lineata (White-lined sphinx moth).